We begin with the raw amino-acid sequence, 85 residues long: NAD(P)H-quinone oxidoreductase subunit L (85 aa).

Transmembrane regions (helical) follow at residues 17–37 (IVAV…PGFV) and 54–74 (AFMY…SPFL).

It belongs to the complex I NdhL subunit family. NDH-1 can be composed of about 15 different subunits; different subcomplexes with different compositions have been identified which probably have different functions.

Its subcellular location is the cellular thylakoid membrane. The enzyme catalyses a plastoquinone + NADH + (n+1) H(+)(in) = a plastoquinol + NAD(+) + n H(+)(out). It carries out the reaction a plastoquinone + NADPH + (n+1) H(+)(in) = a plastoquinol + NADP(+) + n H(+)(out). Its function is as follows. NDH-1 shuttles electrons from an unknown electron donor, via FMN and iron-sulfur (Fe-S) centers, to quinones in the respiratory and/or the photosynthetic chain. The immediate electron acceptor for the enzyme in this species is believed to be plastoquinone. Couples the redox reaction to proton translocation, and thus conserves the redox energy in a proton gradient. Cyanobacterial NDH-1 also plays a role in inorganic carbon-concentration. The protein is NAD(P)H-quinone oxidoreductase subunit L of Crocosphaera subtropica (strain ATCC 51142 / BH68) (Cyanothece sp. (strain ATCC 51142)).